Reading from the N-terminus, the 50-residue chain is uncharacterized protein (50 aa).

A disordered region spans residues 1–50 (MKTGFWQQVLPKRAGRRKEHPVQYMPHKKEENATGLMNPSLHTSHSAILK). The span at 35–50 (GLMNPSLHTSHSAILK) shows a compositional bias: polar residues.

This is an uncharacterized protein from Treponema pallidum (strain Nichols).